We begin with the raw amino-acid sequence, 112 residues long: Small ribosomal subunit protein bS6 (112 aa).

This sequence belongs to the bacterial ribosomal protein bS6 family.

In terms of biological role, binds together with bS18 to 16S ribosomal RNA. The polypeptide is Small ribosomal subunit protein bS6 (Christiangramia forsetii (strain DSM 17595 / CGMCC 1.15422 / KT0803) (Gramella forsetii)).